A 372-amino-acid polypeptide reads, in one-letter code: DNA replication and repair protein RecF (372 aa).

30–37 (GANGQGKT) serves as a coordination point for ATP.

It belongs to the RecF family.

Its subcellular location is the cytoplasm. Functionally, the RecF protein is involved in DNA metabolism; it is required for DNA replication and normal SOS inducibility. RecF binds preferentially to single-stranded, linear DNA. It also seems to bind ATP. The polypeptide is DNA replication and repair protein RecF (Heliobacterium modesticaldum (strain ATCC 51547 / Ice1)).